A 443-amino-acid chain; its full sequence is Serine/threonine-protein kinase SSN3 (443 aa).

Residues 1–24 (MERKRGREMNPPSADPPSATPVAR) form a disordered region. The 331-residue stretch at 54–384 (YKIVGFISSG…AEKALEHRYF (331 aa)) folds into the Protein kinase domain. ATP is bound by residues 60–68 (ISSGTYGRV) and K84. D185 functions as the Proton acceptor in the catalytic mechanism. Residues 405 to 443 (RRVSQEDNDIRTSSLPGTKRSGLPDDSLMGRPAKRLKEG) are disordered.

Belongs to the protein kinase superfamily. CMGC Ser/Thr protein kinase family. CDC2/CDKX subfamily. As to quaternary structure, component of the srb8-11 complex, a regulatory module of the Mediator complex. The cofactor is Mg(2+).

The protein localises to the nucleus. It catalyses the reaction L-seryl-[protein] + ATP = O-phospho-L-seryl-[protein] + ADP + H(+). The catalysed reaction is L-threonyl-[protein] + ATP = O-phospho-L-threonyl-[protein] + ADP + H(+). It carries out the reaction [DNA-directed RNA polymerase] + ATP = phospho-[DNA-directed RNA polymerase] + ADP + H(+). Functionally, component of the srb8-11 complex. The srb8-11 complex is a regulatory module of the Mediator complex which is itself dependent transcription. The srb8-11 complex may be involved in the transcriptional repression of a subset of genes regulated by Mediator. It may inhibit the association of the Mediator complex with RNA polymerase II to form the holoenzyme complex. The srb8-11 complex phosphorylates the C-terminal domain (CTD) of the largest subunit of RNA polymerase II. The polypeptide is Serine/threonine-protein kinase SSN3 (SSN3) (Phaeosphaeria nodorum (strain SN15 / ATCC MYA-4574 / FGSC 10173) (Glume blotch fungus)).